The sequence spans 762 residues: Polyribonucleotide nucleotidyltransferase (762 aa).

Positions 531 and 537 each coordinate Mg(2+). Residues 597–656 (PRVTTIKVPVDKIGEVIGPKGKVINSITEETRAQISIEDDGTVFVGATDGPSAQAAIDKI) enclose the KH domain. Positions 668–737 (GERFLGTVVK…KRGKISLVLV (70 aa)) constitute an S1 motif domain.

The protein belongs to the polyribonucleotide nucleotidyltransferase family. Mg(2+) serves as cofactor.

It localises to the cytoplasm. It carries out the reaction RNA(n+1) + phosphate = RNA(n) + a ribonucleoside 5'-diphosphate. Involved in mRNA degradation. Catalyzes the phosphorolysis of single-stranded polyribonucleotides processively in the 3'- to 5'-direction. This chain is Polyribonucleotide nucleotidyltransferase, found in Mycobacterium ulcerans (strain Agy99).